The sequence spans 485 residues: Threonine synthase-like 2 (485 aa).

Lysine 113 is subject to N6-(pyridoxal phosphate)lysine.

This sequence belongs to the threonine synthase family. The cofactor is pyridoxal 5'-phosphate.

Acts as a catabolic phospho-lyase on both gamma- and beta-phosphorylated substrates. Degrades O-phospho-threonine (PThr) to alpha-ketobutyrate, ammonia and phosphate. This is Threonine synthase-like 2 (Thnsl2) from Rattus norvegicus (Rat).